A 384-amino-acid chain; its full sequence is Monomeric sarcosine oxidase (384 aa).

An FAD-binding site is contributed by 6–36 (DVIVIGLGGMGSAAAHHLSARGARVLGLEKF). Position 315 is an S-8alpha-FAD cysteine (Cys-315).

This sequence belongs to the MSOX/MTOX family. MSOX subfamily. As to quaternary structure, monomer. The cofactor is FAD.

The protein localises to the cytoplasm. The catalysed reaction is sarcosine + O2 + H2O = formaldehyde + glycine + H2O2. In terms of biological role, catalyzes the oxidative demethylation of sarcosine. The sequence is that of Monomeric sarcosine oxidase from Streptomyces avermitilis (strain ATCC 31267 / DSM 46492 / JCM 5070 / NBRC 14893 / NCIMB 12804 / NRRL 8165 / MA-4680).